The chain runs to 228 residues: tRNA (guanine-N(1)-)-methyltransferase (228 aa).

Residues Gly-108 and Val-127 to Leu-132 contribute to the S-adenosyl-L-methionine site.

This sequence belongs to the RNA methyltransferase TrmD family. In terms of assembly, homodimer.

The protein localises to the cytoplasm. The catalysed reaction is guanosine(37) in tRNA + S-adenosyl-L-methionine = N(1)-methylguanosine(37) in tRNA + S-adenosyl-L-homocysteine + H(+). Its function is as follows. Specifically methylates guanosine-37 in various tRNAs. This Metamycoplasma arthritidis (strain 158L3-1) (Mycoplasma arthritidis) protein is tRNA (guanine-N(1)-)-methyltransferase.